We begin with the raw amino-acid sequence, 130 residues long: MPATNILANLFVTLYNTEARRRGDCQVYPTSKLGVEVLGTLKKAGYIGEFEHVEDSRGGKFSVHLLAKITKCGAISPRFKVKKGEYTFWEQQYLPSYDRGMLVVTTNQGVMSHHEAAERGIGGFLIGYVY.

It belongs to the universal ribosomal protein uS8 family. As to quaternary structure, part of the 30S ribosomal subunit.

In terms of biological role, one of the primary rRNA binding proteins, it binds directly to 16S rRNA central domain where it helps coordinate assembly of the platform of the 30S subunit. The polypeptide is Small ribosomal subunit protein uS8 (Cenarchaeum symbiosum (strain A)).